The sequence spans 84 residues: Acyl carrier protein homolog (84 aa).

One can recognise a Carrier domain in the interval 4–79 (HEILLKIKEI…DLVLEVKNLL (76 aa)). O-(pantetheine 4'-phosphoryl)serine is present on serine 39.

4'-phosphopantetheine is transferred from CoA to a specific serine of the apo-ACP-like protein.

It functions in the pathway lipid metabolism; fatty acid biosynthesis. Carrier of the growing fatty acid chain in fatty acid biosynthesis. This chain is Acyl carrier protein homolog, found in Mycoplasma genitalium (strain ATCC 33530 / DSM 19775 / NCTC 10195 / G37) (Mycoplasmoides genitalium).